The primary structure comprises 187 residues: Adenylate kinase (187 aa).

10-15 lines the ATP pocket; it reads GSGKGT. The tract at residues 30-59 is NMP; the sequence is STGDLLRSEVVAGTPLGLQAKQVMAQGDLV. Residues T31, R36, 57–59, 85–88, and Q92 each bind AMP; these read DLV and GYPR. The interval 126-136 is LID; that stretch reads GRAQAEGREDD. R127 is an ATP binding site. Residues R133 and R144 each coordinate AMP. Residue G172 coordinates ATP.

The protein belongs to the adenylate kinase family. As to quaternary structure, monomer.

The protein localises to the cytoplasm. The enzyme catalyses AMP + ATP = 2 ADP. It functions in the pathway purine metabolism; AMP biosynthesis via salvage pathway; AMP from ADP: step 1/1. Catalyzes the reversible transfer of the terminal phosphate group between ATP and AMP. Plays an important role in cellular energy homeostasis and in adenine nucleotide metabolism. This is Adenylate kinase from Xylella fastidiosa (strain M12).